Reading from the N-terminus, the 220-residue chain is Probable cytidylate kinase (220 aa).

10–18 provides a ligand contact to ATP; sequence GPAASGKSS.

Belongs to the cytidylate kinase family. Type 1 subfamily.

It carries out the reaction CMP + ATP = CDP + ADP. It catalyses the reaction dCMP + ATP = dCDP + ADP. The protein is Probable cytidylate kinase of Encephalitozoon cuniculi (strain GB-M1) (Microsporidian parasite).